A 415-amino-acid chain; its full sequence is Thylakoid ADP,ATP carrier protein, chloroplastic (415 aa).

Residues 1–61 (MGEEKSLLQF…NFASLSVAIR (61 aa)) constitute a chloroplast transit peptide. 5 helical membrane passes run 106 to 126 (IALLSIVPKDAALFFAGAFAG), 182 to 207 (LPQVIRIVPYSAVQLFAYETYKKLFR), 219 to 239 (LGAGACAGMTSTLITYPLDVL), 273 to 293 (GPSLLSIAPYIAINFCVFDLV), and 309 to 329 (LLTAVVAAAIATGTCYPLDTI). Solcar repeat units lie at residues 113-205 (PKDA…YKKL), 213-296 (LSVL…VKKS), and 307-387 (SSLL…VKKL). R187 is an ADP binding site. An ADP-binding site is contributed by R330. Residues 362–388 (GFVPNALKSMPNSSIKLTTFDIVKKLI) form a helical membrane-spanning segment.

It belongs to the mitochondrial carrier (TC 2.A.29) family. In terms of tissue distribution, highly expressed in developing photosynthetic organs such as leaves, flower buds and green siliques. Also detected in roots, flowers, mature leaves and stems.

The protein resides in the plastid. It localises to the chloroplast thylakoid membrane. It is found in the chloroplast envelope. With respect to regulation, KM and Vmax values toward ATP only are increased by m-chlorocarbonyl cyanide phenylhydrazone (CCCP). The corresponding values for ADP are not affected. Functionally, specifically transports adenine nucleotides. Involved in the uptake of ATP into thylakoids in exchange for lumenal ADP. The sequence is that of Thylakoid ADP,ATP carrier protein, chloroplastic (TAAC) from Arabidopsis thaliana (Mouse-ear cress).